The primary structure comprises 437 residues: Keratin, type I cytoskeletal 13 (437 aa).

The interval 1 to 95 (MSCRFQSSSM…GVDGGLLSGN (95 aa)) is head. Residues Arg27 and Arg35 each carry the omega-N-methylarginine modification. The interval 96–131 (EKITMQNLNDRLASYLDKVRALEAANADLEVKIRDW) is coil 1A. Residues 96-408 (EKITMQNLND…SLLEGQDAKM (313 aa)) form the IF rod domain. A linker 1 region spans residues 132–150 (HLKQSPASPERDYSAYYKT). The tract at residues 151–242 (IEELRIKILE…KNHEEEMKEF (92 aa)) is coil 1B. The linker 12 stretch occupies residues 243-265 (SNQVVGQVNVEMDATPGIDLTRV). The coil 2 stretch occupies residues 266–404 (LAEMREQYEA…ATYRSLLEGQ (139 aa)). A tail region spans residues 405-437 (DAKMTGFNSGGNNTTTSNGSPSSNSGRPDFRKY). The segment at 408-437 (MTGFNSGGNNTTTSNGSPSSNSGRPDFRKY) is disordered. Residues 409 to 430 (TGFNSGGNNTTTSNGSPSSNSG) are compositionally biased toward low complexity.

The protein belongs to the intermediate filament family. As to quaternary structure, heterotetramer of two type I and two type II keratins. O-glycosylated; glycans consist of single N-acetylglucosamine residues. In terms of tissue distribution, expressed in tongue epithelia (at protein level). Expressed in upper suprabasal layers of the corneal epithelium (at protein level).

Functionally, type 1 keratin. Maintains postnatal tongue mucosal cell homeostasis and tissue organization in response to mechanical stress, potentially via regulation of the G1/S phase cyclins CCNE1 and CCNE2. The polypeptide is Keratin, type I cytoskeletal 13 (Krt13) (Mus musculus (Mouse)).